Consider the following 289-residue polypeptide: Ribosomal RNA small subunit methyltransferase I (289 aa).

Belongs to the methyltransferase superfamily. RsmI family.

The protein resides in the cytoplasm. It catalyses the reaction cytidine(1402) in 16S rRNA + S-adenosyl-L-methionine = 2'-O-methylcytidine(1402) in 16S rRNA + S-adenosyl-L-homocysteine + H(+). Its function is as follows. Catalyzes the 2'-O-methylation of the ribose of cytidine 1402 (C1402) in 16S rRNA. This is Ribosomal RNA small subunit methyltransferase I from Helicobacter pylori (strain J99 / ATCC 700824) (Campylobacter pylori J99).